The following is a 367-amino-acid chain: NAD(P)H-quinone oxidoreductase subunit 1, chloroplastic (367 aa).

A run of 7 helical transmembrane segments spans residues L30 to L50, F98 to F118, L127 to M147, A164 to L184, L273 to P293, V304 to I324, and L340 to T360.

This sequence belongs to the complex I subunit 1 family. As to quaternary structure, NDH is composed of at least 16 different subunits, 5 of which are encoded in the nucleus.

The protein localises to the plastid. It localises to the chloroplast thylakoid membrane. It carries out the reaction a plastoquinone + NADH + (n+1) H(+)(in) = a plastoquinol + NAD(+) + n H(+)(out). The enzyme catalyses a plastoquinone + NADPH + (n+1) H(+)(in) = a plastoquinol + NADP(+) + n H(+)(out). In terms of biological role, NDH shuttles electrons from NAD(P)H:plastoquinone, via FMN and iron-sulfur (Fe-S) centers, to quinones in the photosynthetic chain and possibly in a chloroplast respiratory chain. The immediate electron acceptor for the enzyme in this species is believed to be plastoquinone. Couples the redox reaction to proton translocation, and thus conserves the redox energy in a proton gradient. This is NAD(P)H-quinone oxidoreductase subunit 1, chloroplastic from Nicotiana tabacum (Common tobacco).